A 60-amino-acid polypeptide reads, in one-letter code: Large ribosomal subunit protein uL30 (60 aa).

It belongs to the universal ribosomal protein uL30 family. Part of the 50S ribosomal subunit.

This is Large ribosomal subunit protein uL30 from Burkholderia ambifaria (strain MC40-6).